The sequence spans 122 residues: ATP-dependent Clp protease adapter protein ClpS (122 aa).

The protein belongs to the ClpS family. As to quaternary structure, binds to the N-terminal domain of the chaperone ClpA.

Its function is as follows. Involved in the modulation of the specificity of the ClpAP-mediated ATP-dependent protein degradation. The polypeptide is ATP-dependent Clp protease adapter protein ClpS (Pseudomonas fluorescens (strain SBW25)).